The following is a 181-amino-acid chain: ABC transporter E family member 3 (181 aa).

One can recognise an ABC transporter domain in the interval 20 to 176 (SQIIVMLGEN…KAAFARFHNG (157 aa)). 27 to 34 (GENGTGKT) is an ATP binding site.

The protein belongs to the ABC transporter superfamily. ABCE family. In terms of tissue distribution, mostly expressed in roots and leaves, and, to a lower extent, in stems, flowers and siliques.

This chain is ABC transporter E family member 3 (ABCE3), found in Arabidopsis thaliana (Mouse-ear cress).